Reading from the N-terminus, the 551-residue chain is Calcium-dependent protein kinase 19 (551 aa).

The N-myristoyl glycine moiety is linked to residue Gly2. The interval 12 to 46 is disordered; that stretch reads VKKPTPDISGEQNTEVKSREITPKEQPRQRQPAPR. A compositionally biased stretch (basic and acidic residues) spans 25–39; it reads TEVKSREITPKEQPR. Positions 98 to 357 constitute a Protein kinase domain; that stretch reads YSLGRELGRG…AAQVLEHPWI (260 aa). Residues 104–112 and Lys127 contribute to the ATP site; that span reads LGRGQFGIT. Asp222 acts as the Proton acceptor in catalysis. Position 263 is a phosphoserine (Ser263). The tract at residues 363–393 is autoinhibitory domain; that stretch reads ASDKPIDSAVLSRMKQLRAMNKLKKLAFKFI. EF-hand domains are found at residues 400 to 435, 436 to 471, 472 to 507, and 512 to 542; these read EELKGLKTMFANMDTDKSGTITYDELKSGLEKLGSR, LTETEVKQLLEDADVDGNGTIDYIEFISATMNRFRV, EREDNLFKAFQHFDKDNSGFISRQELETAMKEYNMG, and IKEIISEVDADNDGSINYQEFCNMMKSCSQS. Ca(2+)-binding residues include Asp413, Asp415, Ser417, Thr419, Glu424, Asp449, Asp451, Asn453, Thr455, Glu460, Asp485, Asp487, Ser489, Glu496, Asp520, Asp522, Asp524, Ser526, and Glu531.

It belongs to the protein kinase superfamily. Ser/Thr protein kinase family. CDPK subfamily.

The protein localises to the membrane. It carries out the reaction L-seryl-[protein] + ATP = O-phospho-L-seryl-[protein] + ADP + H(+). It catalyses the reaction L-threonyl-[protein] + ATP = O-phospho-L-threonyl-[protein] + ADP + H(+). With respect to regulation, activated by calcium. Autophosphorylation may play an important role in the regulation of the kinase activity. May play a role in signal transduction pathways that involve calcium as a second messenger. This is Calcium-dependent protein kinase 19 (CPK19) from Arabidopsis thaliana (Mouse-ear cress).